We begin with the raw amino-acid sequence, 369 residues long: Choline-phosphate cytidylyltransferase B (369 aa).

Residues 1-27 (MPVLTTDAESETGIPKSLSNEPPSETM) are disordered. Positions 84, 85, 92, and 122 each coordinate CTP. The phosphocholine site is built by K122 and W151. Residues H168, D169, Y173, Q195, R196, T197, and I200 each coordinate CTP. The tract at residues 309 to 369 (RMLQALSPKQ…SMSEGDEDEK (61 aa)) is disordered. Phosphoserine occurs at positions 315, 319, 322, 323, 329, 331, and 335. Residues 319-339 (SPVSSPTRSRSPSRSPSPTFS) are compositionally biased toward low complexity. Residue T345 is modified to Phosphothreonine. A phosphoserine mark is found at S346, S349, S350, S355, S360, and S362. The segment covering 351 to 362 (PKAASASISSMS) has biased composition (low complexity).

This sequence belongs to the cytidylyltransferase family. Homodimer. As to expression, highly expressed in brain (at protein level). Expressed in liver (at protein level). Expressed at lower levels in lung and gonads. Expressed in brain (at protein level). Expressed at lower levels in lung and gonads.

It is found in the endoplasmic reticulum. Its subcellular location is the cytoplasm. The catalysed reaction is phosphocholine + CTP + H(+) = CDP-choline + diphosphate. The protein operates within phospholipid metabolism; phosphatidylcholine biosynthesis; phosphatidylcholine from phosphocholine: step 1/2. In terms of biological role, catalyzes the key rate-limiting step in the CDP-choline pathway for phosphatidylcholine biosynthesis. Plays an important role in ovary maturation and the maintenance of sperm production. Functionally, catalyzes the key rate-limiting step in the CDP-choline pathway for phosphatidylcholine biosynthesis. This chain is Choline-phosphate cytidylyltransferase B (Pcyt1b), found in Mus musculus (Mouse).